Reading from the N-terminus, the 444-residue chain is Exodeoxyribonuclease 7 large subunit (444 aa).

This sequence belongs to the XseA family. Heterooligomer composed of large and small subunits.

It is found in the cytoplasm. The catalysed reaction is Exonucleolytic cleavage in either 5'- to 3'- or 3'- to 5'-direction to yield nucleoside 5'-phosphates.. In terms of biological role, bidirectionally degrades single-stranded DNA into large acid-insoluble oligonucleotides, which are then degraded further into small acid-soluble oligonucleotides. This Pseudoalteromonas translucida (strain TAC 125) protein is Exodeoxyribonuclease 7 large subunit.